Here is a 398-residue protein sequence, read N- to C-terminus: ATP-dependent (S)-NAD(P)H-hydrate dehydratase 1 (398 aa).

The YjeF C-terminal domain occupies 80-391 (LLRKAFQMIP…GYIGEAFELV (312 aa)). Residues Gly-187 and 240–246 (NHVEFQR) contribute to the (6S)-NADPHX site. Residues 280–284 (KGSID) and 300–309 (GSPKRCGGQG) contribute to the ATP site. Asp-310 provides a ligand contact to (6S)-NADPHX.

This sequence belongs to the NnrD/CARKD family. Requires Mg(2+) as cofactor.

Its subcellular location is the cytoplasm. The catalysed reaction is (6S)-NADHX + ATP = ADP + phosphate + NADH + H(+). The enzyme catalyses (6S)-NADPHX + ATP = ADP + phosphate + NADPH + H(+). Catalyzes the dehydration of the S-form of NAD(P)HX at the expense of ATP, which is converted to ADP. Together with NAD(P)HX epimerase, which catalyzes the epimerization of the S- and R-forms, the enzyme allows the repair of both epimers of NAD(P)HX, a damaged form of NAD(P)H that is a result of enzymatic or heat-dependent hydration. The polypeptide is ATP-dependent (S)-NAD(P)H-hydrate dehydratase 1 (Puccinia graminis f. sp. tritici (strain CRL 75-36-700-3 / race SCCL) (Black stem rust fungus)).